Consider the following 275-residue polypeptide: Ribosomal RNA small subunit methyltransferase A (275 aa).

The S-adenosyl-L-methionine site is built by asparagine 19, leucine 21, glycine 46, glutamate 71, aspartate 94, and asparagine 117.

Belongs to the class I-like SAM-binding methyltransferase superfamily. rRNA adenine N(6)-methyltransferase family. RsmA subfamily.

Its subcellular location is the cytoplasm. The catalysed reaction is adenosine(1518)/adenosine(1519) in 16S rRNA + 4 S-adenosyl-L-methionine = N(6)-dimethyladenosine(1518)/N(6)-dimethyladenosine(1519) in 16S rRNA + 4 S-adenosyl-L-homocysteine + 4 H(+). In terms of biological role, specifically dimethylates two adjacent adenosines (A1518 and A1519) in the loop of a conserved hairpin near the 3'-end of 16S rRNA in the 30S particle. May play a critical role in biogenesis of 30S subunits. The chain is Ribosomal RNA small subunit methyltransferase A from Burkholderia orbicola (strain MC0-3).